The chain runs to 808 residues: Protein SQS1 (808 aa).

Composition is skewed to basic residues over residues 1 to 20 and 28 to 37; these read MAKR…KRGG and RGSKRGRGGR. Disordered stretches follow at residues 1 to 67, 151 to 180, and 485 to 529; these read MAKR…GDLS, RSKN…DMEI, and ETPP…EELG. Basic and acidic residues-rich tracts occupy residues 39 to 48 and 153 to 179; these read RGFEETERSA and KNQE…KDME. The 63-residue stretch at 621–683 folds into the R3H domain; it reads GFHVQNIRDE…HTHIMVEKVK (63 aa). A G-patch domain is found at 748–795; the sequence is QDNIGRRMLEKLGWSSGEGLGAHGNKGISIPVMARVKKSKSGLRHSKE. Residues 764–808 are disordered; it reads GEGLGAHGNKGISIPVMARVKKSKSGLRHSKEDEDTGRSSSFRKK. A compositionally biased stretch (basic residues) spans 782-791; the sequence is RVKKSKSGLR.

Belongs to the SQS1 family.

It localises to the cytoplasm. It is found in the nucleus. Its function is as follows. May be involved in splicing. In Candida glabrata (strain ATCC 2001 / BCRC 20586 / JCM 3761 / NBRC 0622 / NRRL Y-65 / CBS 138) (Yeast), this protein is Protein SQS1 (SQS1).